Consider the following 510-residue polypeptide: Facilitated glucose transporter protein 1 (510 aa).

The disordered stretch occupies residues 1-29; it reads MSEKSRSDTSATASLSDSSKSPSSYSTPG. Over 1-46 the chain is Cytoplasmic; that stretch reads MSEKSRSDTSATASLSDSSKSPSSYSTPGTTTQKIIFPDGKLTKCL. Residues 8–29 are compositionally biased toward low complexity; that stretch reads DTSATASLSDSSKSPSSYSTPG. The helical transmembrane segment at 47–67 threads the bilayer; that stretch reads AFSAFVITLASFQFGYHIGCV. At 68 to 100 the chain is on the extracellular side; the sequence is NAPGGLITEWIIGSHKDLFDKELSRENADLAWS. The chain crosses the membrane as a helical span at residues 101-121; the sequence is VAVSVFAVGGMIGGLSSGWLA. At 122–127 the chain is on the cytoplasmic side; the sequence is DKVGRR. Residues 128–146 traverse the membrane as a helical segment; the sequence is GALFYNNLLALAAAALMGL. Residues 147–160 are Extracellular-facing; sequence AKSVGAYPMVILGR. The helical transmembrane segment at 161–181 threads the bilayer; it reads LIIGLNCGFSSALVPMFLTEI. Residues 182–195 lie on the Cytoplasmic side of the membrane; sequence SPNNLRGMLGSLHQ. Q195 is a binding site for D-glucose. A helical transmembrane segment spans residues 196–216; that stretch reads LLVTIAILVSQIFGLPHLLGT. The Extracellular portion of the chain corresponds to 217–219; it reads GDR. A helical membrane pass occupies residues 220 to 240; the sequence is WPLIFAFTVVPAVLQLALLML. Residues 241–299 lie on the Cytoplasmic side of the membrane; the sequence is CPESPKYTMAVRGQRNEAESALKKLRDTEDVSTEIEAMQEEATAAGVQEKPKMGDMFKG. A helical membrane pass occupies residues 300 to 320; sequence ALLWPMSIAIMMMLAQQLSGI. D-glucose-binding positions include 315–316, N321, and N352; that span reads QQ. The Extracellular segment spans residues 321-341; that stretch reads NVAMFYSTVIFRGAGLTGNEP. A helical membrane pass occupies residues 342–362; sequence FYATIGMGAVNVIMTLISVWL. Topologically, residues 363–373 are cytoplasmic; it reads VDHPKFGRRSL. A helical transmembrane segment spans residues 374–394; it reads LLAGLTGMFVSTLLLVGALTI. Over 395–409 the chain is Extracellular; it reads QNSGGDKWASYSAIG. Residues 410-430 traverse the membrane as a helical segment; that stretch reads FVLLFVISFATGPGAIPWFFV. W427 is a D-glucose binding site. The Cytoplasmic portion of the chain corresponds to 431-445; that stretch reads SEIFDSSARGNANSI. Residues 446–464 form a helical membrane-spanning segment; that stretch reads AVMVNWAANLLVGLTFLPI. Topologically, residues 465-470 are extracellular; sequence NNLMQQ. The chain crosses the membrane as a helical span at residues 471 to 491; that stretch reads YSFFIFSGFLAFFIFYTWKFV. At 492 to 510 the chain is on the cytoplasmic side; the sequence is PETKGKSIEQIQAEFEKRK.

This sequence belongs to the major facilitator superfamily. Sugar transporter (TC 2.A.1.1) family. Glucose transporter subfamily. In terms of tissue distribution, isoform a is expressed in pharyngeal muscle and intestinal cells in both embryos and adults (at protein level).

Its subcellular location is the cell membrane. It localises to the basolateral cell membrane. In terms of biological role, facilitative glucose transporter that plays a role in glucose metabolism and regulation of longevity. May also play a role in lipid metabolism. Glucose transport activity of isoform a is competitively inhibited by mannose, galactose and fructose, suggesting ability to transport also other hexose sugars. The polypeptide is Facilitated glucose transporter protein 1 (Caenorhabditis elegans).